The following is a 1750-amino-acid chain: Protein TIC 214 (1750 aa).

Helical transmembrane passes span 12–32, 69–89, 97–117, 129–149, 177–197, and 216–236; these read KIINSVIVVGLYYGFMTALSI, FIMGQFIRLISIYYGPLYVAL, ILALPYLLIHLFWNTDKSFFA, LEIYCVFLNHFALQLLNSCIL, FAWFIGQLFILNCFELVLVWI, and IFVIFLNCIFGSLLFLLSIQC. Residues 260 to 277 are compositionally biased toward basic and acidic residues; that stretch reads RERLQKEEERGVEKKEQS. Disordered stretches follow at residues 260–282, 617–638, 718–738, 1205–1225, and 1419–1512; these read RERLQKEEERGVEKKEQSTEEDP, ATTTNSKTNTTKDTNLETKKES, STDKKRGKTKKEEKRENKQRE, RNSRGNYRLSDSKKQNVPKPV, and ETDS…NKKE. A compositionally biased stretch (low complexity) spans 617-629; that stretch reads ATTTNSKTNTTKD. Residues 727–738 are compositionally biased toward basic and acidic residues; the sequence is KKEEKRENKQRE. Residues 1420-1512 show a composition bias toward basic and acidic residues; that stretch reads TDSKQKSETD…TKSDKKNKKE (93 aa).

The protein belongs to the TIC214 family. Part of the Tic complex.

The protein resides in the plastid. It localises to the chloroplast inner membrane. In terms of biological role, involved in protein precursor import into chloroplasts. May be part of an intermediate translocation complex acting as a protein-conducting channel at the inner envelope. The protein is Protein TIC 214 of Cuscuta reflexa (Southern Asian dodder).